The following is a 196-amino-acid chain: Proteasome subunit beta 1 (196 aa).

Positions 1-6 (MEKKTG) are cleaved as a propeptide — removed in mature form; by autocatalysis. Thr7 (nucleophile) is an active-site residue.

It belongs to the peptidase T1B family. As to quaternary structure, the 20S proteasome core is composed of 14 alpha and 14 beta subunits that assemble into four stacked heptameric rings, resulting in a barrel-shaped structure. The two inner rings, each composed of seven catalytic beta subunits, are sandwiched by two outer rings, each composed of seven alpha subunits. The catalytic chamber with the active sites is on the inside of the barrel. Has a gated structure, the ends of the cylinder being occluded by the N-termini of the alpha-subunits. Is capped at one or both ends by the proteasome regulatory ATPase, PAN.

The protein resides in the cytoplasm. The enzyme catalyses Cleavage of peptide bonds with very broad specificity.. The formation of the proteasomal ATPase PAN-20S proteasome complex, via the docking of the C-termini of PAN into the intersubunit pockets in the alpha-rings, triggers opening of the gate for substrate entry. Interconversion between the open-gate and close-gate conformations leads to a dynamic regulation of the 20S proteasome proteolysis activity. Component of the proteasome core, a large protease complex with broad specificity involved in protein degradation. The sequence is that of Proteasome subunit beta 1 from Pyrococcus furiosus (strain ATCC 43587 / DSM 3638 / JCM 8422 / Vc1).